The chain runs to 96 residues: Small ribosomal subunit protein bS6 (96 aa).

It belongs to the bacterial ribosomal protein bS6 family.

Functionally, binds together with bS18 to 16S ribosomal RNA. The chain is Small ribosomal subunit protein bS6 from Streptococcus pyogenes serotype M1.